The primary structure comprises 298 residues: MAVVTMRQLLDSGVHFGHQTRRWNPKMKRFILTERSGSYIIDLQQSLTYIDKTYDFVRETVAHGGTILFVGTKKQAQQAIAEQATRVGQPYVNQRWLGGLLTNFQTVSKRLARMKELEELDFEGTTSGFTKKELLIKKRELDKLHKSLGGIRNLSKTPSALWVVDTKKEHLAIDEAKKLGIPVIAILDTNCDPDEVQYPIPGNDDAIRSVSLLTHIVADAAAEGLIQRHQKPEEGVEAAEPLAEWEQELLAQPAAEVQASAETEKAADADLAEAKADSAAVVAEGEAAADAVAETPAE.

This sequence belongs to the universal ribosomal protein uS2 family.

The protein is Small ribosomal subunit protein uS2 of Leifsonia xyli subsp. xyli (strain CTCB07).